Here is a 185-residue protein sequence, read N- to C-terminus: Elongation factor P (185 aa).

The protein belongs to the elongation factor P family.

It localises to the cytoplasm. It participates in protein biosynthesis; polypeptide chain elongation. Involved in peptide bond synthesis. Stimulates efficient translation and peptide-bond synthesis on native or reconstituted 70S ribosomes in vitro. Probably functions indirectly by altering the affinity of the ribosome for aminoacyl-tRNA, thus increasing their reactivity as acceptors for peptidyl transferase. The polypeptide is Elongation factor P (Listeria innocua serovar 6a (strain ATCC BAA-680 / CLIP 11262)).